We begin with the raw amino-acid sequence, 465 residues long: Phospholipase A1-II 5 (465 aa).

The Acyl-ester intermediate role is filled by Ser233. Catalysis depends on charge relay system residues Ser233, Asp297, and His336.

This sequence belongs to the AB hydrolase superfamily. Lipase family.

Its subcellular location is the cytoplasm. Acylhydrolase that catalyzes the hydrolysis of phospholipids at the sn-1 position. This Oryza sativa subsp. indica (Rice) protein is Phospholipase A1-II 5.